The chain runs to 449 residues: Doublesex- and mab-3-related transcription factor A2 (449 aa).

A DNA-binding region (DM) is located at residues 57–104 (CARCRNHGVVSALKGHKRYCRWKDCMCAKCTLIAERQRVMAAQVALRR). The interval 166-259 (KNQLSGSATP…PSPSSAASRH (94 aa)) is disordered. The span at 167–177 (NQLSGSATPQP) shows a compositional bias: polar residues. Positions 230 to 240 (GSVSSIGSDSG) are enriched in low complexity. Residues 260–295 (MNAIDILTRVFPSHKRSVLELVLQGCGKDVVQAIEQ) form the DMA domain.

It belongs to the DMRT family.

It localises to the nucleus. May be involved in sexual development. This is Doublesex- and mab-3-related transcription factor A2 (dmrta2) from Oreochromis niloticus (Nile tilapia).